We begin with the raw amino-acid sequence, 289 residues long: Phosphatidylglycerol--prolipoprotein diacylglyceryl transferase (289 aa).

The next 7 helical transmembrane spans lie at 23–43 (ALHWYGLMYLVGFVFAMWLAV), 61–81 (LLYMGFLGVFVGGRLGYVLFY), 99–119 (GGMSFHGGLMGVICVMLWFAH), 125–145 (FFQVADFIAPLIPFGLGAGRL), 199–219 (SQLYQMMLEGVALFIILNLFI), 226–246 (GSVSGLFLIGYGTFRIITEFF), and 259–279 (LFSMGQILSLPMVIAGILMMV). Residue Arg144 participates in a 1,2-diacyl-sn-glycero-3-phospho-(1'-sn-glycerol) binding.

This sequence belongs to the Lgt family.

The protein localises to the cell inner membrane. It carries out the reaction L-cysteinyl-[prolipoprotein] + a 1,2-diacyl-sn-glycero-3-phospho-(1'-sn-glycerol) = an S-1,2-diacyl-sn-glyceryl-L-cysteinyl-[prolipoprotein] + sn-glycerol 1-phosphate + H(+). It participates in protein modification; lipoprotein biosynthesis (diacylglyceryl transfer). Functionally, catalyzes the transfer of the diacylglyceryl group from phosphatidylglycerol to the sulfhydryl group of the N-terminal cysteine of a prolipoprotein, the first step in the formation of mature lipoproteins. The chain is Phosphatidylglycerol--prolipoprotein diacylglyceryl transferase from Pectobacterium carotovorum subsp. carotovorum (strain PC1).